Reading from the N-terminus, the 415-residue chain is MQTSDRDLSGPEASPSGMPEVLSECPPAPTKSAAFDLFNLVLSYKRLEIYLEPLKDAGDGVRYLLRWQMPLCSLLTCLGLNILFLTLNEGAWYSMGALMISVPALLGYLQEVCRGQLPESELMRRKYHSIRQEDLQRVRLSRVHLSRPEAVAEVKSFLIQLEAFLARLCYTCESAYRVLHWENPVVSSQFYGALLGMVCMLYLLPLCWVLALLNSTLFLGNGDFFRVVCEYRACLQRRMNPRQEECACESSALQGAGGRGLLDSSPAPTPTEDLTPGSVEEAEEAEPDEEFKDAIEETHLVVLEDEEGTPCPAEDELTLQDNGFLSKNEVLRSKVSRLTERLRKRYPTNNFGNCAGCAATFSVLKKRRSCSNCGNSFCSRCCSFKVPRSSMGATAPEAQRETVCVCASCNQTLSK.

The disordered stretch occupies residues 1–24 (MQTSDRDLSGPEASPSGMPEVLSE). Residues 1–66 (MQTSDRDLSG…AGDGVRYLLR (66 aa)) lie on the Cytoplasmic side of the membrane. The segment at 1 to 92 (MQTSDRDLSG…LFLTLNEGAW (92 aa)) is sufficient for homooligomerization. The tract at residues 1 to 210 (MQTSDRDLSG…LYLLPLCWVL (210 aa)) is sufficient for localization to endoplasmic reticulum tubular network and for interactions with REEP1, REEP5, ATL1, ATL2, ATL3 and SPAST. The interval 51–64 (LEPLKDAGDGVRYL) is necessary for interaction with RAB11A and function in neurite outgrowth. The helical transmembrane segment at 67–87 (WQMPLCSLLTCLGLNILFLTL) threads the bilayer. Position 88 (Asn88) is a topological domain, lumenal. A helical transmembrane segment spans residues 89 to 109 (EGAWYSMGALMISVPALLGYL). At 110-192 (QEVCRGQLPE…NPVVSSQFYG (83 aa)) the chain is on the cytoplasmic side. The helical intramembrane region spans 193 to 213 (ALLGMVCMLYLLPLCWVLALL). The Cytoplasmic segment spans residues 214-415 (NSTLFLGNGD…CASCNQTLSK (202 aa)). Residues 254–290 (QGAGGRGLLDSSPAPTPTEDLTPGSVEEAEEAEPDEE) form a disordered region. The tract at residues 275-365 (TPGSVEEAEE…GCAATFSVLK (91 aa)) is necessary for interaction with KIF5A. The span at 280 to 290 (EEAEEAEPDEE) shows a compositional bias: acidic residues. The interval 290 to 296 (EFKDAIE) is necessary for interaction with VAPA. Residues 348 to 414 (TNNFGNCAGC…VCASCNQTLS (67 aa)) form an FYVE-type zinc finger. The Zn(2+) site is built by Cys354, Cys357, Cys370, Cys373, Cys378, Cys381, Cys406, and Cys409.

Can form homooligomers (monomers, dimers and tetramers). Interacts with RAB11A (GDP-bound form); regulates RAB11A. Interacts with FKBP8; may negatively regulate ZFYVE27 phosphorylation. Isoform 1 interacts to a greater extent than isoform 2 with VAPB (via MSP domain). Isoform 1 interacts to a greater extent than isoform 2 with VAPA (via MSP domain). Interaction with VAPA may regulate ZFYVE27 retention in the endoplasmic reticulum and its function in cell projections formation. Interacts with ATL2, ATL3, SPAST and RTN3. Interacts with REEP1, REEP5 and ATL1. Interacts with RAB11B (GDP-bound form), SURF4, KIF5B and KIF5C. Isoform 1 and 2 interact with KIFA. Phosphorylated. Phosphorylation is induced by NGF through the MAPK/ERK pathway and modulates interaction with RAB11A. Astrocytes express both isoform 1 and isoform 2 and oligodendrocytes express only isoform 2 (at protein level). Isoform 1 is expressed specifically in the central nervous system and selectively in neuronal cells. Isoform 2 is expressed in cerebrum, cerebellum, spinal cord, heart, thymus, spleen, intestine and lung.

It is found in the recycling endosome membrane. The protein resides in the endoplasmic reticulum membrane. It localises to the cell projection. The protein localises to the growth cone membrane. Its function is as follows. Key regulator of RAB11-dependent vesicular trafficking during neurite extension through polarized membrane transport. Promotes axonal elongation and contributes to the establishment of neuronal cell polarity. Involved in nerve growth factor-induced neurite formation in VAPA-dependent manner. Contributes to both the formation and stabilization of the tubular ER network. Involved in ER morphogenesis by regulating the sheet-to-tubule balance and possibly the density of tubule interconnections. Acts as an adapter protein that facilitates the interaction of KIF5A with VAPA, VAPB, SURF4, RAB11A, RAB11B and RTN3 and the ZFYVE27-KIF5A complex contributes to the transport of these proteins in neurons. Can induce formation of neurite-like membrane protrusions in non-neuronal cells in a KIF5A/B-dependent manner. This chain is Protrudin (Zfyve27), found in Mus musculus (Mouse).